The following is a 529-amino-acid chain: V-set and immunoglobulin domain-containing protein 10 (529 aa).

The N-terminal stretch at 1–18 is a signal peptide; sequence MMITSAVVLYLLLLSHQT. Ig-like C2-type domains follow at residues 19–110 and 129–217; these read VSEE…QTLS and PATF…QELL. Over 21-411 the chain is Extracellular; sequence EEQVQQFVIG…LNVKTSAGNG (391 aa). Residues N34, N35, N46, N135, N147, N159, N211, N269, N280, N284, N330, N357, and N376 are each glycosylated (N-linked (GlcNAc...) asparagine). An intrachain disulfide couples C40 to C96. An intrachain disulfide couples C150 to C199. In terms of domain architecture, Ig-like C2-type 3 spans 317 to 403; sequence PTGQPLATAL…GARELEVYLN (87 aa). The cysteines at positions 335 and 387 are disulfide-linked. Residues 412 to 432 traverse the membrane as a helical segment; sequence GAIVGIFVSVLVMMIGIVVGV. The Cytoplasmic portion of the chain corresponds to 433–529; the sequence is TVYTKRDRIC…PQRAELQPAV (97 aa).

Its subcellular location is the membrane. This is V-set and immunoglobulin domain-containing protein 10 (vsig10) from Danio rerio (Zebrafish).